A 640-amino-acid polypeptide reads, in one-letter code: MGQPSLTWMLMVVVASWFITTAATDTSEARWCSECHSNATCTEDEAVTTCTCQEGFTGDGLTCVDLDECAIPGAHNCSANSSCVNTPGSFSCVCPEGFRLSPGLGCTDVDECAEPGLSHCHALATCVNVVGSYLCVCPAGYRGDGWHCECSPGSCGPGLDCVPEGDALVCADPCQAHRTLDEYWRSTEYGEGYACDTDLRGWYRFVGQGGARMAETCVPVLRCNTAAPMWLNGTHPSSDEGIVSRKACAHWSGHCCLWDASVQVKACAGGYYVYNLTAPPECHLAYCTDPSSVEGTCEECSIDEDCKSNNGRWHCQCKQDFNITDISLLEHRLECGANDMKVSLGKCQLKSLGFDKVFMYLSDSRCSGFNDRDNRDWVSVVTPARDGPCGTVLTRNETHATYSNTLYLADEIIIRDLNIKINFACSYPLDMKVSLKTALQPMVSALNIRVGGTGMFTVRMALFQTPSYTQPYQGSSVTLSTEAFLYVGTMLDGGDLSRFALLMTNCYATPSSNATDPLKYFIIQDRCPHTRDSTIQVVENGESSQGRFSVQMFRFAGNYDLVYLHCEVYLCDTMNEKCKPTCSGTRFRSGSVIDQSRVLNLGPITRKGVQATVSRAFSSLGLLKVWLPLLLSATLTLTFQ.

The signal sequence occupies residues 1-24 (MGQPSLTWMLMVVVASWFITTAAT). The 37-residue stretch at 28–64 (EARWCSECHSNATCTEDEAVTTCTCQEGFTGDGLTCV) folds into the EGF-like 1 domain. Cystine bridges form between C32/C41, C35/C50, C52/C63, C69/C83, C77/C92, C94/C106, C112/C126, C120/C135, C137/C148, C150/C161, C155/C170, C174/C267, C195/C282, C217/C255, C223/C287, C248/C256, C297/C306, C300/C315, C317/C347, C335/C425, and C366/C389. A glycan (N-linked (GlcNAc...) asparagine) is linked at N38. Residues 65 to 107 (DLDECAIPGAHNCSANSSCVNTPGSFSCVCPEGFRLSPGLGCT) form the EGF-like 2; calcium-binding domain. N-linked (GlcNAc...) asparagine glycosylation is found at N76 and N80. Residues 108–149 (DVDECAEPGLSHCHALATCVNVVGSYLCVCPAGYRGDGWHCE) form the EGF-like 3; calcium-binding domain. The interval 150–171 (CSPGSCGPGLDCVPEGDALVCA) is beta hairpin. Residues 172–291 (DPCQAHRTLD…CHLAYCTDPS (120 aa)) are D10C. N232 is a glycosylation site (N-linked (GlcNAc...) (complex) asparagine). N-linked (GlcNAc...) (high mannose) asparagine glycosylation occurs at N275. One can recognise an EGF-like 4 domain in the interval 292–323 (SVEGTCEECSIDEDCKSNNGRWHCQCKQDFNI). N322 is a glycosylation site (N-linked (GlcNAc...) (complex) asparagine). The tract at residues 334–429 (ECGANDMKVS…KINFACSYPL (96 aa)) is ZP-N. The ZP domain occupies 334-589 (ECGANDMKVS…PTCSGTRFRS (256 aa)). N396 carries N-linked (GlcNAc...) (complex) asparagine glycosylation. Positions 430–453 (DMKVSLKTALQPMVSALNIRVGGT) are flexible ZP-N/ZP-C linker; important for secretion and polymerization into filaments. The internal hydrophobic patch (IHP) stretch occupies residues 454-465 (GMFTVRMALFQT). The interval 454 to 589 (GMFTVRMALF…PTCSGTRFRS (136 aa)) is ZP-C. 3 disulfide bridges follow: C506–C566, C527–C582, and C571–C578. A glycan (N-linked (GlcNAc...) (complex) asparagine; alternate) is linked at N513. An N-linked (GlcNAc...) (high mannose) asparagine; alternate glycan is attached at N513. The essential for cleavage by HPN stretch occupies residues 586–589 (RFRS). The external hydrophobic patch (EHP); regulates polymerization into filaments stretch occupies residues 598 to 606 (VLNLGPITR). A lipid anchor (GPI-anchor amidated serine) is attached at S614. The propeptide at 615 to 640 (RAFSSLGLLKVWLPLLLSATLTLTFQ) is removed in mature form.

In terms of assembly, homodimer that then polymerizes into long filaments. The filaments can additionally assemble laterally to form a sheet. The filaments consist of a zigzag-shaped backbone with laterally protruding arms which interact with bacterial adhesin fimH. Two fimH molecules can bind to a single UMOD monomer. In terms of processing, N-glycosylated. N-glycan heterogeneity at Asn-232: Hex7HexNAc6 (major) and dHex1Hex7HexNAc6 (minor); at Asn-322: dHex1Hex6HexNAc5 (minor), dHex1Hex7HexNAc6 (major) and dHex1Hex8HexNAc7 (minor); at Asn-396: Hex6HexNAc5 (major), dHex1Hex6HexNAc5 (minor) and Hex7HexNAc6 (minor). Glycosylated Asn-232 interacts with E.coli adhesin fimH. Other complex glycosylation sites may serve as binding sites for proteins from other bacteria inclduding K.pneumoniae, P.aeruginosa and S.mitis. Proteolytically cleaved at a conserved C-terminal proteolytic cleavage site to generate the secreted form found in urine. This cleavage is catalyzed by HPN. Expressed in the tubular cells of the kidney. Most abundant protein in normal urine (at protein level). Synthesized exclusively in the kidney. Expressed exclusively by epithelial cells of the thick ascending limb of Henle's loop (TALH) and of distal convoluted tubule lumen.

The protein resides in the apical cell membrane. The protein localises to the basolateral cell membrane. It localises to the cell projection. Its subcellular location is the cilium membrane. It is found in the secreted. Functions in biogenesis and organization of the apical membrane of epithelial cells of the thick ascending limb of Henle's loop (TALH), where it promotes formation of complex filamentous gel-like structure that may play a role in the water barrier permeability. May serve as a receptor for binding and endocytosis of cytokines (IL-1, IL-2) and TNF. Facilitates neutrophil migration across renal epithelia. In terms of biological role, in the urine, may contribute to colloid osmotic pressure, retards passage of positively charged electrolytes, and inhibits formation of liquid containing supersaturated salts and subsequent formation of salt crystals. Protects against urinary tract infections by binding to type 1 fimbriated E.coli. Binds to bacterial adhesin fimH which mediates the stable formation of bacterial aggregates, prevents the binding of E.coli to uroplakins UPK1A and UPK1B which act as urothelial receptors for type I fimbriae, and allows for pathogen clearance through micturation. Also promotes aggregation of other bacteria including K.pneumoniae, P.aeruginosa and S.mitis and so may also protect against other uropathogens. The polypeptide is Uromodulin (UMOD) (Homo sapiens (Human)).